A 287-amino-acid chain; its full sequence is Ret finger protein-like 4A (287 aa).

The RING-type; degenerate zinc finger occupies 11–53; the sequence is CPVCLKDLEEAVQLKCGYACCLQCLNSLQKEPDGEGLLCRFCS. A B30.2/SPRY domain is found at 78-276; that stretch reads EPKLKSVLTM…LSICSVINPS (199 aa).

Interacts with PSMB1, UBE2A and CCNB1.

It localises to the cytoplasm. The protein resides in the nucleus. The protein is Ret finger protein-like 4A (RFPL4A) of Homo sapiens (Human).